The sequence spans 380 residues: Lipid-A-disaccharide synthase (380 aa).

This sequence belongs to the LpxB family.

It catalyses the reaction a lipid X + a UDP-2-N,3-O-bis[(3R)-3-hydroxyacyl]-alpha-D-glucosamine = a lipid A disaccharide + UDP + H(+). Its pathway is bacterial outer membrane biogenesis; LPS lipid A biosynthesis. In terms of biological role, condensation of UDP-2,3-diacylglucosamine and 2,3-diacylglucosamine-1-phosphate to form lipid A disaccharide, a precursor of lipid A, a phosphorylated glycolipid that anchors the lipopolysaccharide to the outer membrane of the cell. This chain is Lipid-A-disaccharide synthase, found in Francisella tularensis subsp. tularensis (strain FSC 198).